Here is a 381-residue protein sequence, read N- to C-terminus: Metacaspase-8 (381 aa).

Active-site residues include histidine 86 and cysteine 140. At cysteine 140 the chain carries S-nitrosocysteine.

Belongs to the peptidase C14B family. Post-translationally, proteolytically processed; by an autocatalytic mechanism.

Cysteine protease that cleaves specifically after arginine residues. Does not cleave caspase-specific substrates. May be involved in the modulation of programmed cell death activated by oxidative stress. This is Metacaspase-8 (AMC8) from Arabidopsis thaliana (Mouse-ear cress).